Here is a 476-residue protein sequence, read N- to C-terminus: TOM1-like protein 1 (476 aa).

The VHS domain occupies 22 to 154 (ATFAGVQTED…DLVKKGVQFP (133 aa)). The interval 155–179 (PSEAEAETARQETAQISSNPPTSVP) is disordered. A compositionally biased stretch (polar residues) spans 170–179 (ISSNPPTSVP). Phosphoserine is present on Ser-171. The GAT domain occupies 200–288 (EQIGKLHSEL…AILGYERFTR (89 aa)). Over residues 298 to 314 (KNQKEATNTTSEPSAPS) the composition is skewed to polar residues. The segment at 298 to 327 (KNQKEATNTTSEPSAPSQDLLDLSPSPRMP) is disordered. Phosphoserine occurs at positions 314, 321, and 323. The segment at 392–395 (YDNF) is interaction with GRB2. The short motif at 421 to 425 (LPPLP) is the SH3-binding element. The interaction with PIK3R1 stretch occupies residues 442–445 (YEVM). At Tyr-460 the chain carries Phosphotyrosine. The SH2-binding signature appears at 460–463 (YEEI).

It belongs to the TOM1 family. Interacts with FYN, GRB2 and PIK3R1 when phosphorylated. Interacts with LYN. Post-translationally, phosphorylated on tyrosines by FYN and LYN.

Its subcellular location is the golgi apparatus. It is found in the golgi stack. It localises to the endosome membrane. The protein localises to the cytoplasm. The protein resides in the membrane. Probable adapter protein involved in signaling pathways. Interacts with the SH2 and SH3 domains of various signaling proteins when it is phosphorylated. May promote FYN activation, possibly by disrupting intramolecular SH3-dependent interactions. This chain is TOM1-like protein 1 (TOM1L1), found in Homo sapiens (Human).